Here is a 396-residue protein sequence, read N- to C-terminus: Activity-regulated cytoskeleton-associated protein (396 aa).

Residues 54–78 (SKQVERELKGLHRSVGKLENNLDGY) adopt a coiled-coil conformation. Residues 89-100 (KSIKACLCRCQE) are interaction with SH3GL1 or SH3GL3. The tract at residues 195-214 (QSWVPGEDGQPSPGVDTQIF) is interaction with DNM2. The residue at position 260 (S260) is a Phosphoserine. Glycyl lysine isopeptide (Lys-Gly) (interchain with G-Cter in ubiquitin) cross-links involve residues K268 and K269. Position 278 is a phosphothreonine (T278). The interval 358–396 (GLEQAAEPSVTPLPTEDETEALTPALTSESVASDRTQPE) is disordered. Positions 382 to 396 (ALTSESVASDRTQPE) are enriched in polar residues.

It belongs to the ARC/ARG3.1 family. Homooligomer; homooligomerizes into virion-like capsids. Interacts with SH3GL1/endophilin-2, SH3GL3/endophilin-3 and DNM2/DYN2. Interacts with CAMK2B (in the kinase inactive state); leading to target ARC to inactive synapses. Interacts with PSEN1. Interacts with GRIN2A and GRIN2B; inhibiting homooligomerization. Post-translationally, palmitoylation anchors the protein into the membrane by allowing direct insertion into the hydrophobic core of the lipid bilayer. In terms of processing, ubiquitinated by UBE3A, leading to its degradation by the proteasome, thereby promoting AMPA receptors (AMPARs) expression at synapses. Ubiquitinated by RNF216 at Lys-268 and Lys-269 limiting ARC protein levels induced by synaptic activity and thus regulating ARC-dependent forms of synaptic plasticity. Phosphorylation at Ser-260 by CaMK2 prevents homooligomerization into virion-like capsids by disrupting an interaction surface essential for high-order oligomerization. Phosphorylation by CaMK2 inhibits synaptic activity. In terms of tissue distribution, expressed exclusively in certain parts of the brain including cortex and molecular layer of the hippocampus. Typically expressed at high level in a minority of neurons. Basal expression higher in cortex than in hippocampus, highest in visual cortex.

The protein localises to the extracellular vesicle membrane. Its subcellular location is the postsynaptic cell membrane. It localises to the synapse. The protein resides in the postsynaptic density. It is found in the early endosome membrane. The protein localises to the cell projection. Its subcellular location is the dendrite. It localises to the cytoplasm. The protein resides in the cytoskeleton. It is found in the cell cortex. The protein localises to the dendritic spine. Its subcellular location is the cytoplasmic vesicle. It localises to the secretory vesicle. The protein resides in the acrosome. It is found in the clathrin-coated vesicle membrane. Functionally, master regulator of synaptic plasticity that self-assembles into virion-like capsids that encapsulate RNAs and mediate intercellular RNA transfer in the nervous system. ARC protein is released from neurons in extracellular vesicles that mediate the transfer of ARC mRNA into new target cells, where ARC mRNA can undergo activity-dependent translation. ARC capsids are endocytosed and are able to transfer ARC mRNA into the cytoplasm of neurons. Acts as a key regulator of synaptic plasticity: required for protein synthesis-dependent forms of long-term potentiation (LTP) and depression (LTD) and for the formation of long-term memory. Regulates synaptic plasticity by promoting endocytosis of AMPA receptors (AMPARs) in response to synaptic activity: this endocytic pathway maintains levels of surface AMPARs in response to chronic changes in neuronal activity through synaptic scaling, thereby contributing to neuronal homeostasis. Acts as a postsynaptic mediator of activity-dependent synapse elimination in the developing cerebellum by mediating elimination of surplus climbing fiber synapses. Accumulates at weaker synapses, probably to prevent their undesired enhancement. This suggests that ARC-containing virion-like capsids may be required to eliminate synaptic material. Required to transduce experience into long-lasting changes in visual cortex plasticity and for long-term memory. Involved in postsynaptic trafficking and processing of amyloid-beta A4 (APP) via interaction with PSEN1. In addition to its role in synapses, also involved in the regulation of the immune system: specifically expressed in skin-migratory dendritic cells and regulates fast dendritic cell migration, thereby regulating T-cell activation. This chain is Activity-regulated cytoskeleton-associated protein, found in Rattus norvegicus (Rat).